We begin with the raw amino-acid sequence, 120 residues long: NAD(P)H-quinone oxidoreductase subunit 3, chloroplastic (120 aa).

The next 3 membrane-spanning stretches (helical) occupy residues 9 to 29 (IFWA…LISG), 64 to 84 (MFAL…PWAM), and 88 to 108 (VLGV…IVGL).

The protein belongs to the complex I subunit 3 family. NDH is composed of at least 16 different subunits, 5 of which are encoded in the nucleus.

The protein localises to the plastid. Its subcellular location is the chloroplast thylakoid membrane. It carries out the reaction a plastoquinone + NADH + (n+1) H(+)(in) = a plastoquinol + NAD(+) + n H(+)(out). It catalyses the reaction a plastoquinone + NADPH + (n+1) H(+)(in) = a plastoquinol + NADP(+) + n H(+)(out). In terms of biological role, NDH shuttles electrons from NAD(P)H:plastoquinone, via FMN and iron-sulfur (Fe-S) centers, to quinones in the photosynthetic chain and possibly in a chloroplast respiratory chain. The immediate electron acceptor for the enzyme in this species is believed to be plastoquinone. Couples the redox reaction to proton translocation, and thus conserves the redox energy in a proton gradient. The polypeptide is NAD(P)H-quinone oxidoreductase subunit 3, chloroplastic (Ranunculus macranthus (Large buttercup)).